The primary structure comprises 496 residues: Glutamate--tRNA ligase (496 aa).

Residues 11–21 (PSPTGLLHIGN) carry the 'HIGH' region motif. The short motif at 255-259 (KLSKR) is the 'KMSKS' region element. Residue K258 participates in ATP binding.

It belongs to the class-I aminoacyl-tRNA synthetase family. Glutamate--tRNA ligase type 1 subfamily. Monomer.

It is found in the cytoplasm. It carries out the reaction tRNA(Glu) + L-glutamate + ATP = L-glutamyl-tRNA(Glu) + AMP + diphosphate. Its function is as follows. Catalyzes the attachment of glutamate to tRNA(Glu) in a two-step reaction: glutamate is first activated by ATP to form Glu-AMP and then transferred to the acceptor end of tRNA(Glu). The chain is Glutamate--tRNA ligase from Streptococcus pyogenes serotype M49 (strain NZ131).